Consider the following 151-residue polypeptide: SsrA-binding protein (151 aa).

It belongs to the SmpB family.

The protein resides in the cytoplasm. Its function is as follows. Required for rescue of stalled ribosomes mediated by trans-translation. Binds to transfer-messenger RNA (tmRNA), required for stable association of tmRNA with ribosomes. tmRNA and SmpB together mimic tRNA shape, replacing the anticodon stem-loop with SmpB. tmRNA is encoded by the ssrA gene; the 2 termini fold to resemble tRNA(Ala) and it encodes a 'tag peptide', a short internal open reading frame. During trans-translation Ala-aminoacylated tmRNA acts like a tRNA, entering the A-site of stalled ribosomes, displacing the stalled mRNA. The ribosome then switches to translate the ORF on the tmRNA; the nascent peptide is terminated with the 'tag peptide' encoded by the tmRNA and targeted for degradation. The ribosome is freed to recommence translation, which seems to be the essential function of trans-translation. The chain is SsrA-binding protein from Lactobacillus acidophilus (strain ATCC 700396 / NCK56 / N2 / NCFM).